The chain runs to 179 residues: Transcription factor 21 (179 aa).

The disordered stretch occupies residues 20–86 (CDGIKLDPNK…KQVQRNAANA (67 aa)). Positions 34–46 (SNDSNEESSTCDN) are enriched in polar residues. A compositionally biased stretch (basic residues) spans 50–64 (KKGRGTSGKRRKASS). Polar residues predominate over residues 70-80 (GTINQEGKQVQ). A bHLH domain is found at 79-131 (VQRNAANARERARMRVLSKAFSRLKTTLPWVPPDTKLSKLDTLRLASSYIAHL).

As to quaternary structure, efficient DNA binding requires dimerization with another bHLH protein. In terms of tissue distribution, at the start of neurulation (stage 13), expressed in the pronephros. At tailbud stage (stage 25-28), expression is high in the anterior-most branchial arch and pronephric glomus. At stage 40, staining persists in the glomus and in the epicardium region of the heart, and at stage 42, expression is higher in the glomus than in the kidney tubule or duct. In adults, expression is highest in the rectum and the spleen, with significant expression in the duodenum, heart, kidney, lungs, pancreas, skin, liver and muscle.

The protein resides in the nucleus. Involved in epithelial-mesenchymal interactions in kidney and lung morphogenesis that include epithelial differentiation and branching morphogenesis. In Xenopus laevis (African clawed frog), this protein is Transcription factor 21 (tcf21).